A 1441-amino-acid chain; its full sequence is Protein clueless (1441 aa).

Disordered regions lie at residues 1 to 79 (MALD…EAAT) and 106 to 131 (VAAN…ELES). The segment covering 8 to 22 (KNSSSAATGDANTVK) has biased composition (polar residues). Positions 54 to 63 (AKKKGKKNRN) are enriched in basic residues. Low complexity-rich tracts occupy residues 64-79 (KSPP…EAAT) and 106-126 (VAAN…AASS). Ser273 is modified (phosphoserine). The region spanning 427–669 (RAEDAFSSKL…RTFPPDVNFL (243 aa)) is the Clu domain. Residues 726–753 (KKQDEAKEGTKEPASETEKESPPKAITE) are compositionally biased toward basic and acidic residues. Disordered regions lie at residues 726–769 (KKQD…GETK) and 961–1009 (EIHK…SGGT). Residues 964–977 (KKRTNTKYNKHKSS) show a composition bias toward basic residues. Over residues 978–1009 (KSSGSGSKQSGQTSNQNGTSTSPSSSTASGGT) the composition is skewed to low complexity. 3 TPR repeats span residues 1109 to 1142 (AYNF…LNNV), 1235 to 1268 (ALID…NLKY), and 1270 to 1303 (GAKA…EKET).

It belongs to the CLU family.

It is found in the cytoplasm. Functionally, mRNA-binding protein involved in proper cytoplasmic distribution of mitochondria. The polypeptide is Protein clueless (Drosophila willistoni (Fruit fly)).